The following is a 451-amino-acid chain: Serine/threonine-protein phosphatase 2A 55 kDa regulatory subunit B delta isoform (451 aa).

7 WD repeats span residues 30 to 69 (AEADIISTVEFNYSGDLLATGDKGGRVVIFQREQENKSRP), 95 to 136 (EIEE…KRAE), 179 to 217 (AHTYHINSISVNSDHETYLSADDLRINLWHLEITDRSFN), 228 to 268 (ELTE…LCDR), 287 to 325 (EIISSISDVKFSHSGRYMMTRDYLSVKVWDLNMENRPVE), 342 to 383 (ENDC…DITL), and 418 to 451 (DFNKKILHTAWHPMENIIAVAATNNLYIFQDKIN).

It belongs to the phosphatase 2A regulatory subunit B family. As to quaternary structure, PP2A consists of a common heterodimeric core enzyme, composed of a 36 kDa catalytic subunit (subunit C) and a 65 kDa constant regulatory subunit (PR65 or subunit A), that associates with a variety of regulatory subunits.

It localises to the cytoplasm. Functionally, substrate-recognition subunit of protein phosphatase 2A (PP2A) that plays a key role in cell cycle by controlling mitosis entry and exit. The activity of PP2A complexes containing PPP2R2D (PR55-delta) fluctuate during the cell cycle: the activity is high in interphase and low in mitosis. In Gallus gallus (Chicken), this protein is Serine/threonine-protein phosphatase 2A 55 kDa regulatory subunit B delta isoform (PPP2R2D).